Consider the following 397-residue polypeptide: Nuclear egress protein 2 (397 aa).

The Perinuclear space segment spans residues 1–358 (MEMNKVLHQD…GPSRPQSGPW (358 aa)). Disordered stretches follow at residues 205-245 (RTAG…PPPP) and 291-332 (AAAG…PSLE). Ser216 is subject to Phosphoserine. Low complexity-rich tracts occupy residues 224–239 (PSCS…AAAG) and 291–301 (AAAGQDVGGSA). A compositionally biased stretch (basic residues) spans 310-322 (SRRRGVSTHHRHP). Residues 359-381 (LPARFATLGPLVLALLLVLALLW) form a helical membrane-spanning segment. Residues 382–397 (RGHGQSSSPTRSAHRD) are Nuclear-facing.

Belongs to the herpesviridae NEC2 protein family. Forms a heterohexameric complex with NEC1. Interacts with host UBA7 and RNF170; this interaction promotes UBA7 proteasomal degradation. Post-translationally, phosphorylated. Phosphorylation by viral kinase UL97 at Ser-216 plays an important role for correct viral nuclear egress complex (NEC) localization.

It is found in the host nucleus inner membrane. In terms of biological role, plays an essential role in virion nuclear egress, the first step of virion release from infected cell. Within the host nucleus, NEC1 interacts with the newly formed capsid through the vertexes and directs it to the inner nuclear membrane by associating with NEC2. Induces the budding of the capsid at the inner nuclear membrane as well as its envelopment into the perinuclear space. There, the NEC1/NEC2 complex promotes the fusion of the enveloped capsid with the outer nuclear membrane and the subsequent release of the viral capsid into the cytoplasm where it will reach the secondary budding sites in the host Golgi or trans-Golgi network. Inhibits host ISGylation and subsequent innate antiviral response by targeting host UBA7 for proteasomal degradation. This Human cytomegalovirus (strain AD169) (HHV-5) protein is Nuclear egress protein 2.